The following is a 364-amino-acid chain: Solute carrier family 35 member C2 (364 aa).

The next 2 membrane-spanning stretches (helical) occupy residues alanine 14 to tyrosine 34 and phenylalanine 42 to leucine 62. The N-linked (GlcNAc...) asparagine glycan is linked to asparagine 102. 7 helical membrane-spanning segments follow: residues serine 104 to isoleucine 124, leucine 136 to tyrosine 156, phenylalanine 166 to leucine 186, phenylalanine 202 to leucine 222, leucine 238 to phenylalanine 258, leucine 272 to glycine 292, and isoleucine 295 to alanine 315. Phosphoserine is present on residues serine 335 and serine 336.

It belongs to the TPT transporter family. SLC35C subfamily.

It localises to the golgi apparatus. The protein localises to the cis-Golgi network membrane. Its subcellular location is the endoplasmic reticulum-Golgi intermediate compartment membrane. Its function is as follows. May play an important role in the cellular response to tissue hypoxia. May be either a GDP-fucose transporter that competes with SLC35C1 for GDP-fucose, or a factor that otherwise enhances the fucosylation of Notch and is required for optimal Notch signaling in mammalian cells. This is Solute carrier family 35 member C2 (Slc35c2) from Mus musculus (Mouse).